A 96-amino-acid chain; its full sequence is Putative regulatory protein Teth514_1762 (96 aa).

Belongs to the RemA family.

This is Putative regulatory protein Teth514_1762 from Thermoanaerobacter sp. (strain X514).